Here is a 120-residue protein sequence, read N- to C-terminus: NAD(P)H-quinone oxidoreductase subunit 3, chloroplastic (120 aa).

Transmembrane regions (helical) follow at residues 9-29, 64-84, and 88-108; these read IFWAFLIISSLIPILAFLISG, MFALVFVVFDVETVFLYPWAM, and VLGVSVFIEALIFVLIPIIGS.

Belongs to the complex I subunit 3 family. As to quaternary structure, NDH is composed of at least 16 different subunits, 5 of which are encoded in the nucleus.

It localises to the plastid. The protein localises to the chloroplast thylakoid membrane. The enzyme catalyses a plastoquinone + NADH + (n+1) H(+)(in) = a plastoquinol + NAD(+) + n H(+)(out). It catalyses the reaction a plastoquinone + NADPH + (n+1) H(+)(in) = a plastoquinol + NADP(+) + n H(+)(out). NDH shuttles electrons from NAD(P)H:plastoquinone, via FMN and iron-sulfur (Fe-S) centers, to quinones in the photosynthetic chain and possibly in a chloroplast respiratory chain. The immediate electron acceptor for the enzyme in this species is believed to be plastoquinone. Couples the redox reaction to proton translocation, and thus conserves the redox energy in a proton gradient. In Drimys granadensis, this protein is NAD(P)H-quinone oxidoreductase subunit 3, chloroplastic.